Reading from the N-terminus, the 861-residue chain is Translation initiation factor IF-2 (861 aa).

Positions 107–272 (AQKQQDIQRA…QRKKKSKVVQ (166 aa)) are disordered. Residues 115–128 (RAAEEAAAKERETE) are compositionally biased toward basic and acidic residues. Polar residues-rich tracts occupy residues 148 to 158 (SVQQEAANMDT) and 169 to 180 (VDESVSATTAGG). Residues 210–228 (NKEDSEVRREPADAEDLKR) show a composition bias toward basic and acidic residues. Basic residues predominate over residues 260–269 (RARQRKKKSK). The tr-type G domain maps to 362-531 (SRAPVVSVMG…LLQSEMLELT (170 aa)). Positions 371-378 (GHVDHGKT) are G1. 371 to 378 (GHVDHGKT) provides a ligand contact to GTP. Residues 396–400 (GITQH) are G2. Positions 417-420 (DTPG) are G3. GTP contacts are provided by residues 417 to 421 (DTPGH) and 471 to 474 (NKMD). A G4 region spans residues 471–474 (NKMD). Residues 507–509 (SAH) form a G5 region.

Belongs to the TRAFAC class translation factor GTPase superfamily. Classic translation factor GTPase family. IF-2 subfamily.

It is found in the cytoplasm. One of the essential components for the initiation of protein synthesis. Protects formylmethionyl-tRNA from spontaneous hydrolysis and promotes its binding to the 30S ribosomal subunits. Also involved in the hydrolysis of GTP during the formation of the 70S ribosomal complex. The protein is Translation initiation factor IF-2 of Hahella chejuensis (strain KCTC 2396).